Reading from the N-terminus, the 633-residue chain is Heterogeneous nuclear ribonucleoprotein R (633 aa).

Positions 1 to 24 (MANQVNGNAVQLKEEEEPMDTSSV) are disordered. At Ala-2 the chain carries N-acetylalanine. Residues Lys-13 and Lys-171 each participate in a glycyl lysine isopeptide (Lys-Gly) (interchain with G-Cter in SUMO2) cross-link. 3 consecutive RRM domains span residues 165 to 244 (TEVF…ISVA), 246 to 328 (NRLF…WADP), and 341 to 411 (KVLF…LAKP). Lys-359 is covalently cross-linked (Glycyl lysine isopeptide (Lys-Gly) (interchain with G-Cter in SUMO2)). Position 366 is an N6-acetyllysine (Lys-366). Residues 412-418 (PDKKRKE) carry the Nuclear localization signal motif. The disordered stretch occupies residues 412 to 456 (PDKKRKERQAARQASRSTAYEDYYYHPPPRMPPPIRGRGRGGGRG). Over residues 437 to 446 (HPPPRMPPPI) the composition is skewed to pro residues. The RNA-binding RGG-box stretch occupies residues 447-567 (RGRGRGGGRG…SRGSRGNRGG (121 aa)). The 1; approximate repeat unit spans residues 462–471 (PDYYGYEDYY). The interval 462–497 (PDYYGYEDYYDDYYGYDYHDYRGGYEDPYYGYDDGY) is 3 X 11 AA approximate repeats of D-D-Y-Y-G-Y-D-Y-H-D-Y. Repeat 2 spans residues 472–482 (DDYYGYDYHDY). Residues 488 to 497 (DPYYGYDDGY) form a 3; approximate repeat. Positions 501–510 (GRGGGRGGRG) are enriched in gly residues. Positions 501–633 (GRGGGRGGRG…YQDTYGQQWK (133 aa)) are disordered. The segment covering 511-524 (APPPPRGRGAPPPR) has biased composition (pro residues). The segment covering 525-541 (GRAGYSQRGAPLGPPRG) has biased composition (low complexity). The segment covering 558–570 (SRGSRGNRGGNVG) has biased composition (gly residues). Residues 588–604 (TNNQQNWGSQPIAQQPL) are compositionally biased toward polar residues. Low complexity predominate over residues 605–621 (QQGGDYSGNYGYNNDNQ). The span at 622-633 (EFYQDTYGQQWK) shows a compositional bias: polar residues.

Identified in the spliceosome C complex. Identified in a IGF2BP1-dependent mRNP granule complex containing untranslated mRNAs. Interacts with GTPBP1.

The protein localises to the nucleus. It localises to the microsome. It is found in the nucleoplasm. The protein resides in the cytoplasm. Its function is as follows. Component of ribonucleosomes, which are complexes of at least 20 other different heterogeneous nuclear ribonucleoproteins (hnRNP). hnRNP play an important role in processing of precursor mRNA in the nucleus. This is Heterogeneous nuclear ribonucleoprotein R (HNRNPR) from Homo sapiens (Human).